Reading from the N-terminus, the 239-residue chain is MKRPSGRAPHQLRPIRITRNYTRHAEGSVLVEFGDTRVICTVSAEAGVPRFLKGQGKGWLTAEYGMLPRATGERMAREASRGRQGGRTLEIQRLIGRSLRAALDMSKLGENTLYVDCDVIQADGGTRTASITGAMVALVDALAVLKKRGALKGDPLKQMVAAVSVGIYQGEPILDLDYPEDSDAETDLNVVMTDAGGFIEVQGTAEGEPFQPEELNAMLALATQGIRELFELQRAVLAD.

Phosphate is bound by residues Arg87 and 125–127; that span reads GTR.

The protein belongs to the RNase PH family. Homohexameric ring arranged as a trimer of dimers.

It catalyses the reaction tRNA(n+1) + phosphate = tRNA(n) + a ribonucleoside 5'-diphosphate. Functionally, phosphorolytic 3'-5' exoribonuclease that plays an important role in tRNA 3'-end maturation. Removes nucleotide residues following the 3'-CCA terminus of tRNAs; can also add nucleotides to the ends of RNA molecules by using nucleoside diphosphates as substrates, but this may not be physiologically important. Probably plays a role in initiation of 16S rRNA degradation (leading to ribosome degradation) during starvation. This chain is Ribonuclease PH, found in Azotobacter vinelandii (strain DJ / ATCC BAA-1303).